A 231-amino-acid chain; its full sequence is Somatolactin-1 (231 aa).

Positions 1–24 (MRMIRAIKQGQWAVLLWPYLLTAS) are cleaved as a signal peptide. 3 disulfides stabilise this stretch: Cys-29–Cys-39, Cys-89–Cys-205, and Cys-222–Cys-230. A glycan (N-linked (GlcNAc...) asparagine) is linked at Asn-145.

This sequence belongs to the somatotropin/prolactin family. Pituitary gland.

The protein resides in the secreted. The protein is Somatolactin-1 of Sparus aurata (Gilthead sea bream).